The chain runs to 377 residues: Queuine tRNA-ribosyltransferase (377 aa).

D89 functions as the Proton acceptor in the catalytic mechanism. Residues 89 to 93, D143, Q187, and G214 each bind substrate; that span reads DSGGF. Residues 245–251 are RNA binding; the sequence is GVGKPED. The active-site Nucleophile is the D264. Residues 269-273 are RNA binding; important for wobble base 34 recognition; that stretch reads TRNAR. Zn(2+)-binding residues include C302, C304, C307, and H333.

The protein belongs to the queuine tRNA-ribosyltransferase family. Homodimer. Within each dimer, one monomer is responsible for RNA recognition and catalysis, while the other monomer binds to the replacement base PreQ1. It depends on Zn(2+) as a cofactor.

It carries out the reaction 7-aminomethyl-7-carbaguanine + guanosine(34) in tRNA = 7-aminomethyl-7-carbaguanosine(34) in tRNA + guanine. It functions in the pathway tRNA modification; tRNA-queuosine biosynthesis. Its function is as follows. Catalyzes the base-exchange of a guanine (G) residue with the queuine precursor 7-aminomethyl-7-deazaguanine (PreQ1) at position 34 (anticodon wobble position) in tRNAs with GU(N) anticodons (tRNA-Asp, -Asn, -His and -Tyr). Catalysis occurs through a double-displacement mechanism. The nucleophile active site attacks the C1' of nucleotide 34 to detach the guanine base from the RNA, forming a covalent enzyme-RNA intermediate. The proton acceptor active site deprotonates the incoming PreQ1, allowing a nucleophilic attack on the C1' of the ribose to form the product. After dissociation, two additional enzymatic reactions on the tRNA convert PreQ1 to queuine (Q), resulting in the hypermodified nucleoside queuosine (7-(((4,5-cis-dihydroxy-2-cyclopenten-1-yl)amino)methyl)-7-deazaguanosine). The chain is Queuine tRNA-ribosyltransferase from Shewanella halifaxensis (strain HAW-EB4).